The chain runs to 1170 residues: Integrin alpha-2 (1170 aa).

The N-terminal stretch at 1 to 18 is a signal peptide; it reads PLQLVLVFSQGILNCCVA. The Extracellular portion of the chain corresponds to 19 to 1121; it reads YNVGLPKAKI…KPHEKVEVPT (1103 aa). 2 FG-GAP repeats span residues 23-81 and 90-150; these read LPKA…TTTC and TSMS…LRTS. Cys72 and Cys81 are disulfide-bonded. Asn94, Asn101, and Asn332 each carry an N-linked (GlcNAc...) asparagine glycan. Positions 177 to 354 constitute a VWFA domain; sequence WDAVKNFLEK…TIGEQIFSIE (178 aa). FG-GAP repeat units follow at residues 355–409, 412–464, 466–528, 529–587, and 591–653; these read GTVQ…LIFS, AFEQ…ENGN, TVIQ…ILNW, HQFL…MIRL, and QKIL…FTPK. 3 N-linked (GlcNAc...) asparagine glycosylation sites follow: Asn421, Asn449, and Asn464. The short motif at 472–474 is the Cell attachment site element; that stretch reads RGD. Residues Asp488, Asn490, Asp492, Asp496, Asp552, Asn554, Asp556, Asp560, Asp616, Asn618, Asp620, and Asp624 each coordinate Ca(2+). Cys669 and Cys726 are disulfide-bonded. 2 N-linked (GlcNAc...) asparagine glycosylation sites follow: Asn688 and Asn748. Disulfide bonds link Cys778–Cys784 and Cys854–Cys865. Residue Asn945 is glycosylated (N-linked (GlcNAc...) asparagine). 2 disulfide bridges follow: Cys1008–Cys1039 and Cys1044–Cys1049. Residues Asn1063 and Asn1070 are each glycosylated (N-linked (GlcNAc...) asparagine). Residues 1122–1143 form a helical membrane-spanning segment; sequence GVIVGSVIAGILLLLALVAILW. Residues 1144–1170 lie on the Cytoplasmic side of the membrane; that stretch reads KLGFFKRKYEKMAKNPDETDETTELNS. The GFFKR motif motif lies at 1146 to 1150; that stretch reads GFFKR.

Belongs to the integrin alpha chain family. As to quaternary structure, heterodimer of an alpha and a beta subunit. Alpha-2 associates with beta-1. Interacts with HPS5 and RAB21.

It is found in the membrane. Integrin alpha-2/beta-1 is a receptor for laminin, collagen, collagen C-propeptides, fibronectin and E-cadherin. It recognizes the proline-hydroxylated sequence G-F-P-G-E-R in collagen. It is responsible for adhesion of platelets and other cells to collagens, modulation of collagen and collagenase gene expression, force generation and organization of newly synthesized extracellular matrix. The chain is Integrin alpha-2 (ITGA2) from Bos taurus (Bovine).